The chain runs to 210 residues: Pyridoxine/pyridoxamine 5'-phosphate oxidase (210 aa).

Substrate contacts are provided by residues 7 to 10 (REDY) and lysine 65. FMN-binding positions include 60–65 (RMVLLK), 75–76 (FT), arginine 81, lysine 82, and glutamine 104. Substrate contacts are provided by tyrosine 122, arginine 126, and serine 130. FMN-binding positions include 139–140 (QS) and tryptophan 183. 189–191 (RLH) lines the substrate pocket. Arginine 193 serves as a coordination point for FMN.

The protein belongs to the pyridoxamine 5'-phosphate oxidase family. As to quaternary structure, homodimer. FMN is required as a cofactor.

It catalyses the reaction pyridoxamine 5'-phosphate + O2 + H2O = pyridoxal 5'-phosphate + H2O2 + NH4(+). It carries out the reaction pyridoxine 5'-phosphate + O2 = pyridoxal 5'-phosphate + H2O2. It participates in cofactor metabolism; pyridoxal 5'-phosphate salvage; pyridoxal 5'-phosphate from pyridoxamine 5'-phosphate: step 1/1. The protein operates within cofactor metabolism; pyridoxal 5'-phosphate salvage; pyridoxal 5'-phosphate from pyridoxine 5'-phosphate: step 1/1. Catalyzes the oxidation of either pyridoxine 5'-phosphate (PNP) or pyridoxamine 5'-phosphate (PMP) into pyridoxal 5'-phosphate (PLP). This is Pyridoxine/pyridoxamine 5'-phosphate oxidase from Neisseria meningitidis serogroup B (strain ATCC BAA-335 / MC58).